Reading from the N-terminus, the 403-residue chain is Phosphopentomutase 2 (403 aa).

The Mn(2+) site is built by Asp-13, Asp-298, His-303, Asp-339, His-340, and His-351.

This sequence belongs to the phosphopentomutase family. The cofactor is Mn(2+).

The protein resides in the cytoplasm. The catalysed reaction is 2-deoxy-alpha-D-ribose 1-phosphate = 2-deoxy-D-ribose 5-phosphate. It carries out the reaction alpha-D-ribose 1-phosphate = D-ribose 5-phosphate. Its pathway is carbohydrate degradation; 2-deoxy-D-ribose 1-phosphate degradation; D-glyceraldehyde 3-phosphate and acetaldehyde from 2-deoxy-alpha-D-ribose 1-phosphate: step 1/2. Its function is as follows. Isomerase that catalyzes the conversion of deoxy-ribose 1-phosphate (dRib-1-P) and ribose 1-phosphate (Rib-1-P) to deoxy-ribose 5-phosphate (dRib-5-P) and ribose 5-phosphate (Rib-5-P), respectively. The protein is Phosphopentomutase 2 of Streptococcus agalactiae serotype Ia (strain ATCC 27591 / A909 / CDC SS700).